A 503-amino-acid polypeptide reads, in one-letter code: Maturase K (503 aa).

The protein belongs to the intron maturase 2 family. MatK subfamily.

Its subcellular location is the plastid. The protein localises to the chloroplast. In terms of biological role, usually encoded in the trnK tRNA gene intron. Probably assists in splicing its own and other chloroplast group II introns. The protein is Maturase K of Rosa carolina (Pasture rose).